The chain runs to 502 residues: T-complex protein 11-like X-linked protein 1 (502 aa).

A disordered region spans residues 1–36 (MPKTEETVLQNDPSVAENGAPEPKTPGQSQKSKSFC).

Belongs to the TCP11 family.

This chain is T-complex protein 11-like X-linked protein 1, found in Homo sapiens (Human).